The sequence spans 101 residues: Protein S100-A11 (101 aa).

EF-hand domains lie at 13 to 48 and 54 to 89; these read IESL…ELAS and KDPA…IAVA. Ca(2+)-binding residues include N30, K32, E37, D67, N69, D71, Q73, and E78.

Belongs to the S-100 family. As to quaternary structure, homodimer; disulfide-linked. As to expression, smooth muscle and non-muscle tissues.

In Gallus gallus (Chicken), this protein is Protein S100-A11 (S100A11).